The sequence spans 117 residues: UPF0342 protein OB1136 (117 aa).

This sequence belongs to the UPF0342 family.

The sequence is that of UPF0342 protein OB1136 from Oceanobacillus iheyensis (strain DSM 14371 / CIP 107618 / JCM 11309 / KCTC 3954 / HTE831).